The primary structure comprises 208 residues: Large ribosomal subunit protein bL25 (208 aa).

The protein belongs to the bacterial ribosomal protein bL25 family. CTC subfamily. Part of the 50S ribosomal subunit; part of the 5S rRNA/L5/L18/L25 subcomplex. Contacts the 5S rRNA. Binds to the 5S rRNA independently of L5 and L18.

Its function is as follows. This is one of the proteins that binds to the 5S RNA in the ribosome where it forms part of the central protuberance. In Paracoccus denitrificans (strain Pd 1222), this protein is Large ribosomal subunit protein bL25.